The chain runs to 256 residues: Doublecortin domain-containing protein (256 aa).

Residues 71–103 form a partial p25alpha domain region; sequence NVFERLTDTAYYTGSHRERFDEFGNGRGIAGRE. The region spanning 152-226 is the Doublecortin domain; sequence RLMWLYRNGD…AKYLCTSGEP (75 aa).

It localises to the cytoplasm. The protein resides in the cytoskeleton. In terms of biological role, specifically required in the formation and maintenance of the conoid fibers; the conoid is a component of the cytoskeletal apical complex, which is composed of a left-handed spiral of 14 fibers made from a nontubular tubulin polymer. Promotes the organization, curvature, and stability of the conoid fibers, and probably bridges other conoid components to the tubulin core. In Toxoplasma gondii (strain ATCC 50861 / VEG), this protein is Doublecortin domain-containing protein.